The following is a 186-amino-acid chain: Large ribosomal subunit protein uL5m (186 aa).

Belongs to the universal ribosomal protein uL5 family.

It localises to the mitochondrion. In Solanum tuberosum (Potato), this protein is Large ribosomal subunit protein uL5m (RPL5).